Consider the following 251-residue polypeptide: 3-deoxy-manno-octulosonate cytidylyltransferase (251 aa).

This sequence belongs to the KdsB family.

The protein resides in the cytoplasm. The enzyme catalyses 3-deoxy-alpha-D-manno-oct-2-ulosonate + CTP = CMP-3-deoxy-beta-D-manno-octulosonate + diphosphate. It participates in nucleotide-sugar biosynthesis; CMP-3-deoxy-D-manno-octulosonate biosynthesis; CMP-3-deoxy-D-manno-octulosonate from 3-deoxy-D-manno-octulosonate and CTP: step 1/1. It functions in the pathway bacterial outer membrane biogenesis; lipopolysaccharide biosynthesis. Functionally, activates KDO (a required 8-carbon sugar) for incorporation into bacterial lipopolysaccharide in Gram-negative bacteria. The chain is 3-deoxy-manno-octulosonate cytidylyltransferase from Parabacteroides distasonis (strain ATCC 8503 / DSM 20701 / CIP 104284 / JCM 5825 / NCTC 11152).